A 428-amino-acid chain; its full sequence is Serine--tRNA ligase (428 aa).

Residue 231–233 (TAE) participates in L-serine binding. 262–264 (RSE) provides a ligand contact to ATP. An L-serine-binding site is contributed by Glu-285. 349-352 (EISS) contributes to the ATP binding site. Ser-385 contributes to the L-serine binding site.

This sequence belongs to the class-II aminoacyl-tRNA synthetase family. Type-1 seryl-tRNA synthetase subfamily. As to quaternary structure, homodimer. The tRNA molecule binds across the dimer.

It localises to the cytoplasm. The enzyme catalyses tRNA(Ser) + L-serine + ATP = L-seryl-tRNA(Ser) + AMP + diphosphate + H(+). It catalyses the reaction tRNA(Sec) + L-serine + ATP = L-seryl-tRNA(Sec) + AMP + diphosphate + H(+). The protein operates within aminoacyl-tRNA biosynthesis; selenocysteinyl-tRNA(Sec) biosynthesis; L-seryl-tRNA(Sec) from L-serine and tRNA(Sec): step 1/1. In terms of biological role, catalyzes the attachment of serine to tRNA(Ser). Is also able to aminoacylate tRNA(Sec) with serine, to form the misacylated tRNA L-seryl-tRNA(Sec), which will be further converted into selenocysteinyl-tRNA(Sec). The sequence is that of Serine--tRNA ligase from Staphylococcus aureus (strain MSSA476).